A 560-amino-acid chain; its full sequence is NAD-dependent malic enzyme (560 aa).

Tyr100 serves as the catalytic Proton donor. Arg153 contributes to the NAD(+) binding site. Lys171 (proton acceptor) is an active-site residue. 3 residues coordinate a divalent metal cation: Glu242, Asp243, and Asp266. Asp266 and Asn413 together coordinate NAD(+).

The protein belongs to the malic enzymes family. In terms of assembly, homotetramer. The cofactor is Mg(2+). Mn(2+) is required as a cofactor.

It catalyses the reaction (S)-malate + NAD(+) = pyruvate + CO2 + NADH. The catalysed reaction is oxaloacetate + H(+) = pyruvate + CO2. The protein is NAD-dependent malic enzyme of Psychrobacter arcticus (strain DSM 17307 / VKM B-2377 / 273-4).